A 691-amino-acid chain; its full sequence is Elongation factor G (691 aa).

The 275-residue stretch at E8–V282 folds into the tr-type G domain. GTP contacts are provided by residues A17–T24, D81–H85, and N135–D138.

This sequence belongs to the TRAFAC class translation factor GTPase superfamily. Classic translation factor GTPase family. EF-G/EF-2 subfamily.

The protein resides in the cytoplasm. Functionally, catalyzes the GTP-dependent ribosomal translocation step during translation elongation. During this step, the ribosome changes from the pre-translocational (PRE) to the post-translocational (POST) state as the newly formed A-site-bound peptidyl-tRNA and P-site-bound deacylated tRNA move to the P and E sites, respectively. Catalyzes the coordinated movement of the two tRNA molecules, the mRNA and conformational changes in the ribosome. The chain is Elongation factor G from Prochlorococcus marinus (strain MIT 9211).